We begin with the raw amino-acid sequence, 931 residues long: Beta-mannosidase A (931 aa).

An N-terminal signal peptide occupies residues 1 to 21; the sequence is MRHSIGLAAALLAPTLPVALG. Residues Asn40, Asn79, Asn247, Asn282, Asn316, Asn326, and Asn347 are each glycosylated (N-linked (GlcNAc...) asparagine). The Proton donor role is filled by Glu479. N-linked (GlcNAc...) asparagine glycosylation is found at Asn550, Asn608, Asn658, Asn738, Asn790, Asn798, Asn830, and Asn918.

This sequence belongs to the glycosyl hydrolase 2 family. Beta-mannosidase A subfamily. In terms of assembly, homodimer.

It localises to the secreted. It catalyses the reaction Hydrolysis of terminal, non-reducing beta-D-mannose residues in beta-D-mannosides.. It participates in glycan metabolism; N-glycan degradation. In terms of biological role, exoglycosidase that cleaves the single beta-linked mannose residue from the non-reducing end of beta-mannosidic oligosaccharides of various complexity and length. Involved in the degradation of polymeric mannan and galactomannan. The chain is Beta-mannosidase A (mndA) from Aspergillus niger (strain ATCC MYA-4892 / CBS 513.88 / FGSC A1513).